The sequence spans 894 residues: Protein SEY1 homolog (894 aa).

Composition is skewed to low complexity over residues methionine 1–threonine 10 and valine 36–glutamine 48. A disordered region spans residues methionine 1–histidine 97. The Cytoplasmic portion of the chain corresponds to methionine 1–glycine 800. The stretch at arginine 21–glutamate 60 forms a coiled coil. A compositionally biased stretch (acidic residues) spans glutamate 49–valine 65. Low complexity predominate over residues threonine 78–glutamine 93. The region spanning glycine 138–tyrosine 361 is the GB1/RHD3-type G domain. Glycine 148 to serine 155 provides a ligand contact to GTP. Residues valine 801–isoleucine 821 form a helical membrane-spanning segment. At serine 822–proline 824 the chain is on the lumenal side. The helical transmembrane segment at leucine 825–leucine 845 threads the bilayer. Residues alanine 846 to glutamate 894 lie on the Cytoplasmic side of the membrane.

It belongs to the TRAFAC class dynamin-like GTPase superfamily. GB1/RHD3 GTPase family. RHD3 subfamily.

Its subcellular location is the endoplasmic reticulum membrane. In terms of biological role, probable GTP-binding protein that may be involved in cell development. This is Protein SEY1 homolog from Dictyostelium discoideum (Social amoeba).